The following is a 651-amino-acid chain: UvrABC system protein B (651 aa).

One can recognise a Helicase ATP-binding domain in the interval 25-411 (RGISCGAKEQ…TGGVATEQLI (387 aa)). 38–45 (GVTGSGKT) contacts ATP. Positions 91 to 114 (YYDYYQPEAYIPQSDVYIEKDALI) match the Beta-hairpin motif. The 165-residue stretch at 427 to 591 (DGQIHDVMCE…IVPRTIQKPV (165 aa)) folds into the Helicase C-terminal domain. The segment at 593–615 (TSLSERVGSSRKKVSRDTNTDPA) is disordered. In terms of domain architecture, UVR spans 616–651 (NRDIVELQKEMLLCAENLDFERAVEIRNEIKRLTAP).

Belongs to the UvrB family. Forms a heterotetramer with UvrA during the search for lesions. Interacts with UvrC in an incision complex.

The protein resides in the cytoplasm. Functionally, the UvrABC repair system catalyzes the recognition and processing of DNA lesions. A damage recognition complex composed of 2 UvrA and 2 UvrB subunits scans DNA for abnormalities. Upon binding of the UvrA(2)B(2) complex to a putative damaged site, the DNA wraps around one UvrB monomer. DNA wrap is dependent on ATP binding by UvrB and probably causes local melting of the DNA helix, facilitating insertion of UvrB beta-hairpin between the DNA strands. Then UvrB probes one DNA strand for the presence of a lesion. If a lesion is found the UvrA subunits dissociate and the UvrB-DNA preincision complex is formed. This complex is subsequently bound by UvrC and the second UvrB is released. If no lesion is found, the DNA wraps around the other UvrB subunit that will check the other stand for damage. In Anaplasma marginale (strain St. Maries), this protein is UvrABC system protein B.